Here is an 89-residue protein sequence, read N- to C-terminus: Large ribosomal subunit protein bL27 (89 aa).

Residues 1 to 23 (MAHKKAGGSSRNGRDSAGKRLGI) are disordered.

The protein belongs to the bacterial ribosomal protein bL27 family.

The sequence is that of Large ribosomal subunit protein bL27 from Rhodopseudomonas palustris (strain BisA53).